A 154-amino-acid chain; its full sequence is Myoglobin (154 aa).

The region spanning 2-148 (GLSDGEWQLV…FRNDMAAQYK (147 aa)) is the Globin domain. A Phosphoserine modification is found at Ser-4. His-65 lines the nitrite pocket. Position 65 (His-65) interacts with O2. The residue at position 68 (Thr-68) is a Phosphothreonine. Residue His-94 coordinates heme b.

This sequence belongs to the globin family. As to quaternary structure, monomeric.

Its subcellular location is the cytoplasm. It is found in the sarcoplasm. It catalyses the reaction Fe(III)-heme b-[protein] + nitric oxide + H2O = Fe(II)-heme b-[protein] + nitrite + 2 H(+). The enzyme catalyses H2O2 + AH2 = A + 2 H2O. In terms of biological role, monomeric heme protein which primary function is to store oxygen and facilitate its diffusion within muscle tissues. Reversibly binds oxygen through a pentacoordinated heme iron and enables its timely and efficient release as needed during periods of heightened demand. Depending on the oxidative conditions of tissues and cells, and in addition to its ability to bind oxygen, it also has a nitrite reductase activity whereby it regulates the production of bioactive nitric oxide. Under stress conditions, like hypoxia and anoxia, it also protects cells against reactive oxygen species thanks to its pseudoperoxidase activity. The chain is Myoglobin (MB) from Cervus elaphus (Red deer).